Consider the following 135-residue polypeptide: Large ribosomal subunit protein uL16c (135 aa).

It belongs to the universal ribosomal protein uL16 family. Part of the 50S ribosomal subunit.

It is found in the plastid. It localises to the chloroplast. The sequence is that of Large ribosomal subunit protein uL16c from Gossypium barbadense (Sea Island cotton).